The chain runs to 511 residues: Frizzled/smoothened-like sans CRD protein C (511 aa).

Residues 1–25 (MNQINKFIKNLYLIIITIILIIVIS) form the signal peptide. The Extracellular portion of the chain corresponds to 26–93 (NDNNGLFING…QWESYFEMSL (68 aa)). A glycan (N-linked (GlcNAc...) asparagine) is linked at Asn-51. Residues 94–114 (IMGSISMFASLFLIITYSPLI) traverse the membrane as a helical segment. At 115–122 (NKKHTRHT) the chain is on the cytoplasmic side. The helical transmembrane segment at 123–143 (VGILCMSIGIFFVMVSDGRQL) threads the bilayer. Over 144-172 (WDIESPGEYKKYCPDTGRYARQSDTKCLT) the chain is Extracellular. The chain crosses the membrane as a helical span at residues 173 to 193 (TGLFFQFGCVTAIGWWSILAV). Residues 194–209 (DLWMTIAKKVQTTKKQ) are Cytoplasmic-facing. A helical transmembrane segment spans residues 210–230 (LLYYLIGINTVSLILTFGPVV). The Extracellular portion of the chain corresponds to 231-253 (KNQYGFGNAAIGCWMLDLKYQYG). A helical membrane pass occupies residues 254–274 (FFWIPVGICLSVGSVFIGLIF). The Cytoplasmic segment spans residues 275–295 (WEIYKISDAVKKRYLKKHIKP). A helical transmembrane segment spans residues 296 to 316 (LCLIVLMCLEFLYMFIYYSYI). Residues 317–357 (TANQPTYNKHVAEYIMCLIINAANVPGSYTCQLKTVSPTAQ) lie on the Extracellular side of the membrane. The helical transmembrane segment at 358 to 378 (FLFLIAIRLMGLQGLIFYGLT) threads the bilayer. At 379–511 (AATKKVWANS…RVNSPDNLQP (133 aa)) the chain is on the cytoplasmic side. Residues 430-511 (NGYTTGGSDN…RVNSPDNLQP (82 aa)) are disordered. The span at 433 to 443 (TTGGSDNGVGS) shows a compositional bias: gly residues. Residues 451–460 (KSSSNGGAQD) are compositionally biased toward polar residues. Residues 461-485 (NNNNNNNNNNNNNNNNNNNNNNNNN) are compositionally biased toward low complexity. Polar residues predominate over residues 486–511 (SSSLEISGVESNNSTPRVNSPDNLQP).

This sequence belongs to the G-protein coupled receptor Fz/Smo family.

It is found in the membrane. The sequence is that of Frizzled/smoothened-like sans CRD protein C (fscC) from Dictyostelium discoideum (Social amoeba).